The chain runs to 144 residues: Putative pre-16S rRNA nuclease (144 aa).

It belongs to the YqgF nuclease family.

Its subcellular location is the cytoplasm. Functionally, could be a nuclease involved in processing of the 5'-end of pre-16S rRNA. The chain is Putative pre-16S rRNA nuclease from Lactiplantibacillus plantarum (strain ATCC BAA-793 / NCIMB 8826 / WCFS1) (Lactobacillus plantarum).